A 197-amino-acid polypeptide reads, in one-letter code: uncharacterized protein (197 aa).

Positions 1–30 (MSTYIIINIALLIAIVALIFFLSKKTKSEA) are cleaved as a signal peptide.

This is an uncharacterized protein from Acanthamoeba polyphaga (Amoeba).